Reading from the N-terminus, the 327-residue chain is Zinc transport protein ZntB (327 aa).

The Cytoplasmic segment spans residues methionine 1 to methionine 273. A helical membrane pass occupies residues alanine 274 to isoleucine 294. The Periplasmic segment spans residues proline 295–glutamine 300. The helical transmembrane segment at phenylalanine 301–leucine 321 threads the bilayer. Topologically, residues histidine 322–leucine 327 are cytoplasmic.

Belongs to the CorA metal ion transporter (MIT) (TC 1.A.35) family.

It localises to the cell inner membrane. It catalyses the reaction Zn(2+)(out) + H(+)(out) = Zn(2+)(in) + H(+)(in). In terms of biological role, zinc transporter. Acts as a Zn(2+):proton symporter, which likely mediates zinc ion uptake. The chain is Zinc transport protein ZntB from Escherichia coli O139:H28 (strain E24377A / ETEC).